A 373-amino-acid chain; its full sequence is Ribosomal RNA small subunit methyltransferase H (373 aa).

Residues 92-94 (GGH), Asp111, Tyr138, Asp159, and Gln166 contribute to the S-adenosyl-L-methionine site. 2 stretches are compositionally biased toward basic and acidic residues: residues 343 to 355 (AERA…ERNP) and 363 to 373 (RALEKVGGRGS). Residues 343 to 373 (AERADEQEIERNPRSAPVRLRALEKVGGRGS) are disordered.

It belongs to the methyltransferase superfamily. RsmH family.

Its subcellular location is the cytoplasm. The enzyme catalyses cytidine(1402) in 16S rRNA + S-adenosyl-L-methionine = N(4)-methylcytidine(1402) in 16S rRNA + S-adenosyl-L-homocysteine + H(+). In terms of biological role, specifically methylates the N4 position of cytidine in position 1402 (C1402) of 16S rRNA. This is Ribosomal RNA small subunit methyltransferase H from Mycolicibacterium smegmatis (strain ATCC 700084 / mc(2)155) (Mycobacterium smegmatis).